A 262-amino-acid polypeptide reads, in one-letter code: Homeobox protein Nkx-6.3 (262 aa).

The segment at residues K140 to S199 is a DNA-binding region (homeobox). The segment at K197–D237 is disordered.

Expressed in the developing CNS and gastro-intestinal tract.

Its subcellular location is the nucleus. Putative transcription factor, which may be involved in patterning of central nervous system and pancreas. The chain is Homeobox protein Nkx-6.3 (Nkx6-3) from Mus musculus (Mouse).